The primary structure comprises 313 residues: Jacalin-related lectin 8 (313 aa).

The signal sequence occupies residues 1–23; sequence MFIIYLFIFLSSAIIDSNGVAMA. Jacalin-type lectin domains lie at 24-163 and 165-309; these read QKIE…YVKT and PTKS…YFSP.

It belongs to the jacalin lectin family.

The protein is Jacalin-related lectin 8 (JAL8) of Arabidopsis thaliana (Mouse-ear cress).